A 455-amino-acid chain; its full sequence is Killer cell immunoglobulin-like receptor 3DL2 (455 aa).

The signal sequence occupies residues 1–21; it reads MSLTVVSMACVGFFLLQGAWP. Residues 22–340 lie on the Extracellular side of the membrane; the sequence is LMGGQDKPFL…SKSGICRHLH (319 aa). Ig-like C2-type domains follow at residues 42–102, 137–202, and 237–300; these read GGHV…RPHS, GETV…VPHS, and GENV…FRAL. Intrachain disulfides connect C49-C95 and C144-C195. Residues N179, N239, N273, and N306 are each glycosylated (N-linked (GlcNAc...) asparagine). C244 and C293 are oxidised to a cystine. The chain crosses the membrane as a helical span at residues 341–360; that stretch reads VLIGTSVVIFLFILLLFFLL. Residues 361-455 lie on the Cytoplasmic side of the membrane; it reads YRWCSNKKNA…APQSGLEGVF (95 aa).

Belongs to the immunoglobulin superfamily. In terms of assembly, interacts with peptide-free HLA-F open conformer. Expressed in astrocytes.

The protein localises to the cell membrane. Its function is as follows. Receptor on natural killer (NK) cells and T cells for MHC class I molecules. Upon binding of peptide-free HLA-F open conformer, negatively regulates NK and T cell effector functions. Acts as a receptor on astrocytes for HLA-F. Through interaction with HLA-F, may protect motor neurons from astrocyte-induced toxicity. This Homo sapiens (Human) protein is Killer cell immunoglobulin-like receptor 3DL2.